The chain runs to 981 residues: Rab3 GTPase-activating protein catalytic subunit (981 aa).

Phosphoserine occurs at positions 83, 379, 537, 579, 581, and 590. The segment at 592–613 (TEELKGNGQESGKKGGPKEMAN) is disordered. Ser664 carries the post-translational modification Phosphoserine. Residue Thr908 is modified to Phosphothreonine. The disordered stretch occupies residues 908-937 (TPPEEELKRMGSPEERRQNSVSDFPPPAGR). A compositionally biased stretch (basic and acidic residues) spans 912-925 (EELKRMGSPEERRQ).

This sequence belongs to the Rab3-GAP catalytic subunit family. As to quaternary structure, the Rab3 GTPase-activating complex is a heterodimer composed of RAB3GAP1 and RAB3GAP2. The Rab3 GTPase-activating complex interacts with DMXL2. Interacts with LMAN1. In terms of tissue distribution, ubiquitous.

The protein localises to the cytoplasm. It localises to the endoplasmic reticulum. Its subcellular location is the golgi apparatus. It is found in the cis-Golgi network. Its function is as follows. Catalytic subunit of the Rab3 GTPase-activating (Rab3GAP) complex composed of RAB3GAP1 and RAB3GAP2, which has GTPase-activating protein (GAP) activity towards various Rab3 subfamily members (RAB3A, RAB3B, RAB3C and RAB3D), RAB5A and RAB43, and guanine nucleotide exchange factor (GEF) activity towards RAB18. As part of the Rab3GAP complex, acts as a GAP for Rab3 proteins by converting active RAB3-GTP to the inactive form RAB3-GDP. Rab3 proteins are involved in regulated exocytosis of neurotransmitters and hormones. The Rab3GAP complex, acts as a GEF for RAB18 by promoting the conversion of inactive RAB18-GDP to the active form RAB18-GTP. Recruits and stabilizes RAB18 at the cis-Golgi membrane in fibroblasts where RAB18 is most likely activated. Also involved in RAB18 recruitment at the endoplasmic reticulum (ER) membrane where it maintains proper ER structure. Required for normal eye and brain development. May participate in neurodevelopmental processes such as proliferation, migration and differentiation before synapse formation, and non-synaptic vesicular release of neurotransmitters. This Homo sapiens (Human) protein is Rab3 GTPase-activating protein catalytic subunit.